A 679-amino-acid polypeptide reads, in one-letter code: UvrABC system protein B (679 aa).

The Helicase ATP-binding domain maps to 25–176 (EGVNGGERYQ…NLRGSLRDLV (152 aa)). An ATP-binding site is contributed by 38–45 (GATGTGKT). The Beta-hairpin signature appears at 91–114 (YYDYYQPEAYVPVSDTYIAKTASI). The region spanning 429 to 591 (QVDDLLGEIR…ITPTAAGKKA (163 aa)) is the Helicase C-terminal domain. The UVR domain occupies 638-673 (PELIDQLELKMKESAKKLDFEEAANLRDRIKKLRQK).

It belongs to the UvrB family. Forms a heterotetramer with UvrA during the search for lesions. Interacts with UvrC in an incision complex.

It localises to the cytoplasm. In terms of biological role, the UvrABC repair system catalyzes the recognition and processing of DNA lesions. A damage recognition complex composed of 2 UvrA and 2 UvrB subunits scans DNA for abnormalities. Upon binding of the UvrA(2)B(2) complex to a putative damaged site, the DNA wraps around one UvrB monomer. DNA wrap is dependent on ATP binding by UvrB and probably causes local melting of the DNA helix, facilitating insertion of UvrB beta-hairpin between the DNA strands. Then UvrB probes one DNA strand for the presence of a lesion. If a lesion is found the UvrA subunits dissociate and the UvrB-DNA preincision complex is formed. This complex is subsequently bound by UvrC and the second UvrB is released. If no lesion is found, the DNA wraps around the other UvrB subunit that will check the other stand for damage. In Synechococcus sp. (strain CC9311), this protein is UvrABC system protein B.